We begin with the raw amino-acid sequence, 568 residues long: WW domain-containing protein A (568 aa).

Residues 6 to 129 (PLNNSNGSNS…TGPISHDVVF (124 aa)) form the C2 domain. The 35-residue stretch at 325–359 (VKLPDGWESRIDPVSGKVFYLNHNNKTTSWISPLE) folds into the WW 1 domain. The tract at residues 376 to 461 (TILDNNNNNN…SRPKKTPATP (86 aa)) is disordered. The segment covering 380-418 (NNNNNNNNNNNNNNNNNNNNNNINNTNNIQQKQQAQQQP) has biased composition (low complexity). Residues 435-451 (QKEKEKEKEINAEDYKI) show a composition bias toward basic and acidic residues. Positions 519–552 (QGLPNGWEVRQDQFGRVFYVDHINRATTWTRPTV) constitute a WW 2 domain.

Interacts with calmodulin in the absence of Ca(2+).

It is found in the nucleus. The protein resides in the nucleolus. It localises to the cytoplasm. Its subcellular location is the cell cortex. The protein localises to the cytoskeleton. In terms of biological role, involved in regulation of actin cytoskeleton organization and cytokinesis. The sequence is that of WW domain-containing protein A from Dictyostelium discoideum (Social amoeba).